An 88-amino-acid polypeptide reads, in one-letter code: Small ribosomal subunit protein bS16c (88 aa).

It belongs to the bacterial ribosomal protein bS16 family.

The protein localises to the plastid. It is found in the chloroplast. This chain is Small ribosomal subunit protein bS16c, found in Citrus sinensis (Sweet orange).